Consider the following 246-residue polypeptide: UDP-N-acetyl-D-mannosaminuronic acid transferase (246 aa).

The protein belongs to the glycosyltransferase 26 family.

It carries out the reaction UDP-N-acetyl-alpha-D-mannosaminouronate + N-acetyl-alpha-D-glucosaminyl-di-trans,octa-cis-undecaprenyl diphosphate = beta-D-ManNAcA-(1-&gt;4)-alpha-D-GlcNAc-di-trans,octa-cis-undecaprenyl diphosphate + UDP + H(+). The protein operates within bacterial outer membrane biogenesis; enterobacterial common antigen biosynthesis. Its function is as follows. Catalyzes the synthesis of Und-PP-GlcNAc-ManNAcA (Lipid II), the second lipid-linked intermediate involved in enterobacterial common antigen (ECA) synthesis. The chain is UDP-N-acetyl-D-mannosaminuronic acid transferase from Serratia proteamaculans (strain 568).